The sequence spans 247 residues: Homeobox protein BarH-like 1b (247 aa).

Disordered regions lie at residues Arg118–Ser138 and Gly197–Glu247. The segment at residues Gly135–Val194 is a DNA-binding region (homeobox). Over residues Glu223–Pro234 the composition is skewed to basic and acidic residues.

This sequence belongs to the BAR homeobox family. As to quaternary structure, interacts with serum response factor (SRF). As to expression, expressed in smooth muscle cells of the upper digestive organs and their attached arteries and to craniofacial structures.

It is found in the nucleus. Functionally, transcription factor which is involved with the serum response factor (SRF) in the smooth muscle cell-specific transcription of the beta-tropomyosin gene in the upper digestive organs and their attached arteries. The chain is Homeobox protein BarH-like 1b (BARX1B) from Gallus gallus (Chicken).